Reading from the N-terminus, the 143-residue chain is Flagellar assembly factor FliW (143 aa).

It belongs to the FliW family. Interacts with translational regulator CsrA and flagellin(s).

It localises to the cytoplasm. In terms of biological role, acts as an anti-CsrA protein, binds CsrA and prevents it from repressing translation of its target genes, one of which is flagellin. Binds to flagellin and participates in the assembly of the flagellum. The protein is Flagellar assembly factor FliW of Clostridium botulinum (strain 657 / Type Ba4).